Reading from the N-terminus, the 433-residue chain is 26S proteasome regulatory subunit 7 (433 aa).

Residues 1-22 (MPDYLGADQRKTKEDEKDDKPI) are disordered. Residues 8 to 22 (DQRKTKEDEKDDKPI) are compositionally biased toward basic and acidic residues. Residue K116 is modified to N6-acetyllysine. 216–223 (GPPGTGKT) is an ATP binding site. K422 is subject to N6-acetyllysine.

The protein belongs to the AAA ATPase family. Component of the 19S proteasome regulatory particle complex. The 26S proteasome consists of a 20S core particle (CP) and two 19S regulatory subunits (RP). The regulatory particle is made of a lid composed of 9 subunits, a base containing 6 ATPases including PSMC2 and few additional components. Interacts with NDC80/HEC; this interaction is detected only during M phase. Interacts and SQSTM1. Interacts with PAAF1. Directly interacts with TRIM5. Post-translationally, monoubiquitinated by RNF181. In terms of processing, phosphorylated. Dephosphorylated by UBLCP1 which impairs PSMC2 ATPase activity and disrupts 26S proteasome assembly.

The protein resides in the cytoplasm. The protein localises to the nucleus. In terms of biological role, component of the 26S proteasome, a multiprotein complex involved in the ATP-dependent degradation of ubiquitinated proteins. This complex plays a key role in the maintenance of protein homeostasis by removing misfolded or damaged proteins, which could impair cellular functions, and by removing proteins whose functions are no longer required. Therefore, the proteasome participates in numerous cellular processes, including cell cycle progression, apoptosis, or DNA damage repair. PSMC2 belongs to the heterohexameric ring of AAA (ATPases associated with diverse cellular activities) proteins that unfolds ubiquitinated target proteins that are concurrently translocated into a proteolytic chamber and degraded into peptides. This is 26S proteasome regulatory subunit 7 (PSMC2) from Pongo abelii (Sumatran orangutan).